The sequence spans 311 residues: Probable manganese-dependent inorganic pyrophosphatase (311 aa).

Residues histidine 9, aspartate 13, aspartate 15, aspartate 77, histidine 99, and aspartate 151 each coordinate Mn(2+).

The protein belongs to the PPase class C family. Mn(2+) serves as cofactor.

The protein localises to the cytoplasm. The enzyme catalyses diphosphate + H2O = 2 phosphate + H(+). In Streptococcus pyogenes serotype M49 (strain NZ131), this protein is Probable manganese-dependent inorganic pyrophosphatase.